Reading from the N-terminus, the 327-residue chain is Biotin synthase (327 aa).

A Radical SAM core domain is found at 52 to 279 (TKVQLSTLVS…ASYVRLSAGR (228 aa)). [4Fe-4S] cluster-binding residues include Cys67, Cys71, and Cys74. Residues Cys111, Cys142, Cys202, and Arg274 each contribute to the [2Fe-2S] cluster site.

It belongs to the radical SAM superfamily. Biotin synthase family. In terms of assembly, homodimer. The cofactor is [4Fe-4S] cluster. It depends on [2Fe-2S] cluster as a cofactor.

The catalysed reaction is (4R,5S)-dethiobiotin + (sulfur carrier)-SH + 2 reduced [2Fe-2S]-[ferredoxin] + 2 S-adenosyl-L-methionine = (sulfur carrier)-H + biotin + 2 5'-deoxyadenosine + 2 L-methionine + 2 oxidized [2Fe-2S]-[ferredoxin]. The protein operates within cofactor biosynthesis; biotin biosynthesis; biotin from 7,8-diaminononanoate: step 2/2. Functionally, catalyzes the conversion of dethiobiotin (DTB) to biotin by the insertion of a sulfur atom into dethiobiotin via a radical-based mechanism. This chain is Biotin synthase, found in Chromobacterium violaceum (strain ATCC 12472 / DSM 30191 / JCM 1249 / CCUG 213 / NBRC 12614 / NCIMB 9131 / NCTC 9757 / MK).